The sequence spans 329 residues: Caveolae-associated protein 4a (329 aa).

Disordered regions lie at residues 198-260 (SKEN…NIAK) and 274-329 (KERT…IHED). Residues 198-262 (SKENMNKTRE…RLKENIAKKA (65 aa)) adopt a coiled-coil conformation. Residues 201-220 (NMNKTREKTRENLSKTKESL) are compositionally biased toward basic and acidic residues. A compositionally biased stretch (polar residues) spans 221 to 232 (SKTGQTLGTKFN). Residues 242-260 (EQREKIKQSSERLKENIAK) show a composition bias toward basic and acidic residues. Positions 279-290 (AEGQEGAEAEPA) are enriched in low complexity. Threonine 292 bears the Phosphothreonine mark. Residues 310-329 (TENKREGPVSEEGATRIHED) show a composition bias toward basic and acidic residues.

It belongs to the CAVIN family.

It is found in the cytoplasm. It localises to the myofibril. Its subcellular location is the sarcomere. The protein resides in the membrane. The protein localises to the caveola. Its function is as follows. Induces rhoa activation and activates nppa transcription and myofibrillar organization through the rho/rock signaling pathway. This Danio rerio (Zebrafish) protein is Caveolae-associated protein 4a (cavin4a).